Consider the following 89-residue polypeptide: Small ribosomal subunit protein uS15 (89 aa).

This sequence belongs to the universal ribosomal protein uS15 family. As to quaternary structure, part of the 30S ribosomal subunit. Forms a bridge to the 50S subunit in the 70S ribosome, contacting the 23S rRNA.

One of the primary rRNA binding proteins, it binds directly to 16S rRNA where it helps nucleate assembly of the platform of the 30S subunit by binding and bridging several RNA helices of the 16S rRNA. Its function is as follows. Forms an intersubunit bridge (bridge B4) with the 23S rRNA of the 50S subunit in the ribosome. In Cellvibrio japonicus (strain Ueda107) (Pseudomonas fluorescens subsp. cellulosa), this protein is Small ribosomal subunit protein uS15.